A 403-amino-acid polypeptide reads, in one-letter code: Cystinosin homolog (403 aa).

Residues 1–122 are Lumenal-facing; sequence MKLPVSILFF…YSRITVIRSH (122 aa). Asparagine 45, asparagine 52, asparagine 78, and asparagine 96 each carry an N-linked (GlcNAc...) asparagine glycan. The helical transmembrane segment at 123–143 threads the bilayer; the sequence is WLAILIQIVGWTYFAAWSVSF. Residues 124 to 190 form the PQ-loop 1 domain; the sequence is LAILIQIVGW…MYYNSHVKNI (67 aa). The Cytoplasmic segment spans residues 144–162; the sequence is YPQMYLNFKRKSVVGLNFD. Residues 163–183 traverse the membrane as a helical segment; that stretch reads FLSLNLVGFGAYAMFNLLMYY. Topologically, residues 184–206 are lumenal; it reads NSHVKNIYSMENPRSPPPVLLND. Residues 207 to 227 form a helical membrane-spanning segment; the sequence is VVFAVHAFLACFVTILQCIFY. Over 228-237 the chain is Cytoplasmic; the sequence is ERDQQRISTK. The chain crosses the membrane as a helical span at residues 238–258; the sequence is CIILIIGLVSFGFVSVVVTVL. The Lumenal segment spans residues 259–260; sequence NK. Residues 261–283 form a helical membrane-spanning segment; the sequence is ITILDFVVSLSYIKMAVTCCKYF. The region spanning 266-326 is the PQ-loop 2 domain; it reads FVVSLSYIKM…MVLQAINVND (61 aa). Residues 284–294 are Cytoplasmic-facing; that stretch reads PQAYFNYQRKS. The helical transmembrane segment at 295–315 threads the bilayer; sequence TVGWSIGNILLDFTGGSLDIL. Residues 316–336 are Lumenal-facing; the sequence is QMVLQAINVNDWSAFYANPVK. The helical transmembrane segment at 337 to 357 threads the bilayer; it reads FGLGFVSIFFDIIFMIQHYAL. Topologically, residues 358–403 are cytoplasmic; the sequence is YPDAEVPHNEYHGVDNPDPDSIVRDAEHGAADNESMESTDPIIVHD. Positions 374–388 are enriched in basic and acidic residues; the sequence is PDPDSIVRDAEHGAA. The segment at 374–403 is disordered; that stretch reads PDPDSIVRDAEHGAADNESMESTDPIIVHD.

Belongs to the cystinosin family.

It localises to the lysosome membrane. The protein localises to the cytoplasmic vesicle. It is found in the phagosome. The catalysed reaction is L-cystine(out) + H(+)(out) = L-cystine(in) + H(+)(in). Its function is as follows. Cystine/H(+) symporter that mediates export of cystine, the oxidized dimer of cysteine, from lysosomes. May play a role in the degradation of engulfed apoptotic cells. This chain is Cystinosin homolog (ctns-1), found in Caenorhabditis briggsae.